The primary structure comprises 93 residues: Alpha-defensin 15 (93 aa).

The N-terminal stretch at Met1–Ala19 is a signal peptide. A propeptide spanning residues Asp20–Ser58 is cleaved from the precursor. The tract at residues Gln23–Glu56 is disordered. Intrachain disulfides connect Cys64/Cys92, Cys66/Cys81, and Cys71/Cys91.

This sequence belongs to the alpha-defensin family. Paneth cells of the small bowel.

The protein resides in the secreted. Functionally, probably contributes to the antimicrobial barrier function of the small bowel mucosa. The protein is Alpha-defensin 15 (Defa15) of Mus musculus (Mouse).